The sequence spans 140 residues: Mialostatin (140 aa).

An N-terminal signal peptide occupies residues 1–18 (MAFFKSAVFLVCVVLAAA). 2 disulfide bridges follow: cysteine 90–cysteine 103 and cysteine 114–cysteine 134.

Belongs to the cystatin family. In terms of tissue distribution, expressed in midgut (at protein level).

It is found in the secreted. In terms of biological role, inhibitor of cysteine proteinases. Inhibits several endogenous midgut digestive cysteine proteases, such as cathepsin L1, L3, B and C, but not aspartic protease cathepsin D1 and cysteine protease legumain. Inhibits proteolysis of blood proteins catalyzed by tick gut cysteine cathepsins. Inhibits host cathepsin B (CSTB), C (CTSC), H (CTSH), K (CTSK), L (CTSL) and S (CTSS). This is Mialostatin from Ixodes ricinus (Common tick).